Consider the following 494-residue polypeptide: Glutamyl-tRNA(Gln) amidotransferase subunit A (494 aa).

Catalysis depends on charge relay system residues Lys79 and Ser159. Ser183 functions as the Acyl-ester intermediate in the catalytic mechanism.

The protein belongs to the amidase family. GatA subfamily. As to quaternary structure, heterotrimer of A, B and C subunits.

It carries out the reaction L-glutamyl-tRNA(Gln) + L-glutamine + ATP + H2O = L-glutaminyl-tRNA(Gln) + L-glutamate + ADP + phosphate + H(+). Its function is as follows. Allows the formation of correctly charged Gln-tRNA(Gln) through the transamidation of misacylated Glu-tRNA(Gln) in organisms which lack glutaminyl-tRNA synthetase. The reaction takes place in the presence of glutamine and ATP through an activated gamma-phospho-Glu-tRNA(Gln). This Bartonella henselae (strain ATCC 49882 / DSM 28221 / CCUG 30454 / Houston 1) (Rochalimaea henselae) protein is Glutamyl-tRNA(Gln) amidotransferase subunit A.